A 270-amino-acid chain; its full sequence is MGETIRLTGVHETLLATLQARALDNRQPRPVLGDATAEELLRRIDYDFSRIRTATKDMRIVTFRARKLDEWAGRFLAVHPDAVVLHLACGLDSRAFRMDVPDTVEWIDVDVPDVIELRSRLYPERDGYRMIGASVTTEDWLDTVPRNRPALVVAEGLTPYLREADGEEMLRRVIRHLPTGAVMFDAVLPWTLRFAKYSQLLRATGATFGWGIGNPRSLESRVPGLRFQEQWSMLDSPFLADARPVEKWVGAGMRSIPQLRFAHRLLRYTF.

The protein operates within antibiotic biosynthesis; tetracenomycin C biosynthesis. In terms of biological role, O-methyltransferase that catalyzes the methylation of the C-9 carboxy group of tetracenomycin E (TCM E) to yield TCM A2. Catalyzes as well the following side reactions: methylation of 8-O-methyl-TCM D3 to 9-carboxymethyl-8-O-methyl-TCM D3; and of TCM B3 to 9-carboxymethyl-TCM B3. This Streptomyces glaucescens protein is Tetracenomycin polyketide synthesis O-methyltransferase TcmP (tcmP).